A 506-amino-acid polypeptide reads, in one-letter code: Lysine--tRNA ligase (506 aa).

Mg(2+) contacts are provided by Glu415 and Glu422.

It belongs to the class-II aminoacyl-tRNA synthetase family. Homodimer. Mg(2+) serves as cofactor.

The protein resides in the cytoplasm. It catalyses the reaction tRNA(Lys) + L-lysine + ATP = L-lysyl-tRNA(Lys) + AMP + diphosphate. The polypeptide is Lysine--tRNA ligase (Erwinia tasmaniensis (strain DSM 17950 / CFBP 7177 / CIP 109463 / NCPPB 4357 / Et1/99)).